A 420-amino-acid polypeptide reads, in one-letter code: Mannose-1-phosphate guanylyltransferase regulatory subunit alpha (420 aa).

The substrate-binding domain stretch occupies residues 2–251 (LKAVILIGGP…DGIWSQIKSA (250 aa)). GDP-alpha-D-mannose is bound by residues Glu85 and Gln247. The segment at 273 to 420 (LAKHTPGGPR…SRSFTNQIIL (148 aa)) is hexapeptide repeat domain. The tract at residues 356–384 (TPNDPNPNDPRARMDSESLFKDGKLLPAI) is C-loop.

It belongs to the transferase hexapeptide repeat family. In terms of assembly, component of the GMPPA-GMPPB mannose-1-phosphate guanylyltransferase complex composed of 4 GMPPA subunits and 8 GMPPB subunits; the complex is organized into three layers, a central layer made up of 2 GMPPA dimers sandwiched between two layers each made up of 2 GMPPB dimers.

The protein localises to the cytoplasm. Functionally, regulatory subunit of the GMPPA-GMPPB mannose-1-phosphate guanylyltransferase complex; reduces the catalytic activity of GMPPB when part of the complex. Mediates allosteric feedback inhibition of GMPPB catalytic activity upon binding GDP-alpha-D-mannose. Together with GMPPB regulates GDP-alpha-D-mannose levels. The chain is Mannose-1-phosphate guanylyltransferase regulatory subunit alpha (GMPPA) from Papio anubis (Olive baboon).